We begin with the raw amino-acid sequence, 110 residues long: DNA-directed RNA polymerase subunit omega (110 aa).

The protein belongs to the RNA polymerase subunit omega family. In terms of assembly, the RNAP catalytic core consists of 2 alpha, 1 beta, 1 beta' and 1 omega subunit. When a sigma factor is associated with the core the holoenzyme is formed, which can initiate transcription.

It catalyses the reaction RNA(n) + a ribonucleoside 5'-triphosphate = RNA(n+1) + diphosphate. Promotes RNA polymerase assembly. Latches the N- and C-terminal regions of the beta' subunit thereby facilitating its interaction with the beta and alpha subunits. In Vesicomyosocius okutanii subsp. Calyptogena okutanii (strain HA), this protein is DNA-directed RNA polymerase subunit omega.